The following is a 620-amino-acid chain: Chaperone protein HscA homolog (620 aa).

Belongs to the heat shock protein 70 family.

Functionally, chaperone involved in the maturation of iron-sulfur cluster-containing proteins. Has a low intrinsic ATPase activity which is markedly stimulated by HscB. In Paracidovorax citrulli (strain AAC00-1) (Acidovorax citrulli), this protein is Chaperone protein HscA homolog.